A 316-amino-acid polypeptide reads, in one-letter code: DNA-directed RNA polymerase III subunit RPC6 (316 aa).

A2 bears the N-acetylalanine mark. Residues K5 and K7 each participate in a glycyl lysine isopeptide (Lys-Gly) (interchain with G-Cter in SUMO2) cross-link. The [4Fe-4S] cluster site is built by C287, C290, C296, and C307.

It belongs to the eukaryotic RPC34/RPC39 RNA polymerase subunit family. In terms of assembly, component of the RNA polymerase III complex consisting of 17 subunits: a ten-subunit horseshoe-shaped catalytic core composed of POLR3A/RPC1, POLR3B/RPC2, POLR1C/RPAC1, POLR1D/RPAC2, POLR3K/RPC10, POLR2E/RPABC1, POLR2F/RPABC2, POLR2H/RPABC3, POLR2K/RPABC4 and POLR2L/RPABC5; a mobile stalk composed of two subunits POLR3H/RPC8 and CRCP/RPC9, protruding from the core and functioning primarily in transcription initiation; and additional subunits homologous to general transcription factors of the RNA polymerase II machinery, POLR3C/RPC3-POLR3F/RPC6-POLR3G/RPC7 heterotrimer required for transcription initiation and POLR3D/RPC4-POLR3E/RPC5 heterodimer involved in both transcription initiation and termination. Directly interacts with POLR3C. Interacts with TBP and TFIIIB90 and GTF3C4. Interacts with MAF1. As part of the RNA polymerase III complex, interacts with PKP2.

It localises to the nucleus. In terms of biological role, DNA-dependent RNA polymerase catalyzes the transcription of DNA into RNA using the four ribonucleoside triphosphates as substrates. Specific peripheric component of RNA polymerase III (Pol III) which synthesizes small non-coding RNAs including 5S rRNA, snRNAs, tRNAs and miRNAs from at least 500 distinct genomic loci. Part of POLR3C/RPC3-POLR3F/RPC6-POLR3G/RPC7 heterotrimer that coordinates the dynamics of Pol III stalk and clamp modules during the transition from apo to elongation state. Pol III plays a key role in sensing and limiting infection by intracellular bacteria and DNA viruses, including varicella zoster virus. Acts as a nuclear and cytosolic DNA sensor detecting AT-rich DNA, involved in innate immune response. Can sense non-self dsDNA that serves as template for transcription into dsRNA. The non-self RNA polymerase III transcripts, such as Epstein-Barr virus-encoded RNAs (EBERs) induce type I interferon and NF-kappa-B through the RIG-I pathway. Preferentially binds double-stranded DNA (dsDNA). The chain is DNA-directed RNA polymerase III subunit RPC6 (POLR3F) from Bos taurus (Bovine).